The following is a 485-amino-acid chain: Glutamyl-tRNA(Gln) amidotransferase subunit A (485 aa).

Residues Lys-79 and Ser-154 each act as charge relay system in the active site. Ser-178 acts as the Acyl-ester intermediate in catalysis.

It belongs to the amidase family. GatA subfamily. Heterotrimer of A, B and C subunits.

The catalysed reaction is L-glutamyl-tRNA(Gln) + L-glutamine + ATP + H2O = L-glutaminyl-tRNA(Gln) + L-glutamate + ADP + phosphate + H(+). In terms of biological role, allows the formation of correctly charged Gln-tRNA(Gln) through the transamidation of misacylated Glu-tRNA(Gln) in organisms which lack glutaminyl-tRNA synthetase. The reaction takes place in the presence of glutamine and ATP through an activated gamma-phospho-Glu-tRNA(Gln). The protein is Glutamyl-tRNA(Gln) amidotransferase subunit A of Clostridium botulinum (strain Eklund 17B / Type B).